The chain runs to 127 residues: MQDDPRYRVEVEVSPRFLAHQSTPEEGRYAFAYSIRIQNAGAVPARLIARHWKITDANGRTEQVDGEGVVGEQPRLRPGEAFHYTSGVLLETEQGQMQGYYDMVADDGTEFTAPIAAFVLSVPRTLH.

The ApaG domain occupies 3-127 (DDPRYRVEVE…FVLSVPRTLH (125 aa)).

The chain is Protein ApaG from Xanthomonas campestris pv. campestris (strain 8004).